The sequence spans 281 residues: MATYKLCSVLALSLTLFLLILNKVNSVETISFSFSEFEPGNDNLTLQGAALITQSGVLQLTKINQNGMPAWDSTGRTLYAKPVHIWDMTTGTVASFETRFSFSIEQPYTRPLPADGLVFFMGPTKSKPAQGYGYLGIFNNSKQDNSYQTLGVEFDTFSNPWDPPQVPHIGIDVNSIRSIKTQPFQLDNGQVANVVIKYDASSKILHAVLVYPSSGAIYTIAEIVDVKQVLPEWVDVGLSGATGAQRDAAETHDVYSWSFQASLPETNDAVIPTSNHNTFAI.

A signal peptide spans 1–26; that stretch reads MATYKLCSVLALSLTLFLLILNKVNS. N-linked (GlcNAc...) asparagine glycans are attached at residues N43 and N139. The propeptide occupies 269–281; the sequence is AVIPTSNHNTFAI.

It belongs to the leguminous lectin family. In terms of assembly, homodimer. A minor C-terminal proteolytic processing site is observed at position 268.

Its function is as follows. Galactose and N-acetyllactosamine specific lectin. Binds to the H-2 blood type determinant fucosyl-N-acetyllactosamine. The chain is Lectin from Erythrina corallodendron (Coral tree).